A 253-amino-acid polypeptide reads, in one-letter code: Patatin-like phospholipase domain-containing protein 4 (253 aa).

Positions 6 to 176 (LSFAACGFLG…TNALPILPVG (171 aa)) constitute a PNPLA domain. The short motif at 41-45 (GASAG) is the GXSXG element. The active-site Nucleophile is Ser43. The Proton acceptor role is filled by Asp163. The short motif at 163 to 165 (DGG) is the DGA/G element.

As to expression, expressed in all tissues examined, including heart, brain, placenta, lung, liver, muscle, kidney, pancreas and spleen.

The protein localises to the mitochondrion. It catalyses the reaction a triacylglycerol + H2O = a diacylglycerol + a fatty acid + H(+). The catalysed reaction is a 1,2-diacyl-sn-glycero-3-phosphocholine + H2O = a 1-acyl-sn-glycero-3-phosphocholine + a fatty acid + H(+). The enzyme catalyses an all-trans-retinyl ester + H2O = all-trans-retinol + a fatty acid + H(+). It carries out the reaction 2 a 1-acylglycerol = a 1,2-diacylglycerol + glycerol. It catalyses the reaction a 1-acylglycerol + a 1,2-diacylglycerol = a triacylglycerol + glycerol. The catalysed reaction is a 1-acylglycerol + a 1,3-diacylglycerol = a triacylglycerol + glycerol. The enzyme catalyses a triacylglycerol + H2O = a 1,2-diacylglycerol + a fatty acid + H(+). It carries out the reaction a triacylglycerol + H2O = a 1,3-diacylglycerol + a fatty acid + H(+). It catalyses the reaction a triacylglycerol + all-trans-retinol = an all-trans-retinyl ester + a diacylglycerol. The catalysed reaction is 2 1-(9Z-octadecenoyl)-glycerol = 1,2-di-(9Z-octadecenoyl)-glycerol + glycerol. The enzyme catalyses 1-(9Z-octadecenoyl)-glycerol + 1,2-di-(9Z-octadecenoyl)-glycerol = 1,2,3-tri-(9Z-octadecenoyl)-glycerol + glycerol. It carries out the reaction 1-(9Z-octadecenoyl)-glycerol + 1,3-di-(9Z-octadecenoyl)-glycerol = 1,2,3-tri-(9Z-octadecenoyl)-glycerol + glycerol. It catalyses the reaction 1,2-di-(9Z-octadecenoyl)-glycerol + (9Z)-octadecenoate + H(+) = 1,2,3-tri-(9Z-octadecenoyl)-glycerol + H2O. The catalysed reaction is 1,2,3-tri-(9Z-octadecenoyl)-glycerol + H2O = 1,3-di-(9Z-octadecenoyl)-glycerol + (9Z)-octadecenoate + H(+). The enzyme catalyses all-trans-retinyl hexadecanoate + H2O = all-trans-retinol + hexadecanoate + H(+). It carries out the reaction 1,2,3-tri-(9Z-octadecenoyl)-glycerol + all-trans-retinol = all-trans-retinyl 9Z-octadecenoate + di-(9Z)-octadecenoylglycerol. The triglyceride lipase activity is inhibited by BEL ((E)-6-(bromomethylene)-3-(1-naphthalenyl)-2H-tetrahydropyran-2-one), a suicide substrate inhibitor. Functionally, has abundant triacylglycerol lipase activity. Transfers fatty acid from triglyceride to retinol, hydrolyzes retinylesters, and generates 1,3-diacylglycerol from triglycerides. Additionally possesses acylglycerol transacylase and phospholipase A2 activities. This is Patatin-like phospholipase domain-containing protein 4 from Homo sapiens (Human).